A 556-amino-acid chain; its full sequence is Portal protein (556 aa).

The disordered stretch occupies residues 527–556; that stretch reads AQGAKTLSETQTSDPSALTAIANAAGAPQQ. Positions 533–542 are enriched in polar residues; the sequence is LSETQTSDPS.

The protein belongs to the podoviridae head-to-tail connector protein family. As to quaternary structure, homododecamer.

The protein localises to the virion. Functionally, forms the portal vertex of the capsid. This portal plays critical roles in head assembly, genome packaging, neck/tail attachment, and genome ejection. The portal protein multimerizes as a single ring-shaped homododecamer arranged around a central channel. The chain is Portal protein from Salmonella phage epsilon15.